The sequence spans 413 residues: Probable tRNA pseudouridine synthase D (413 aa).

The active-site Nucleophile is D97. Positions 167–370 (AAPNYYGYQR…YGTYRRVRLE (204 aa)) constitute a TRUD domain.

This sequence belongs to the pseudouridine synthase TruD family.

The enzyme catalyses uridine(13) in tRNA = pseudouridine(13) in tRNA. Could be responsible for synthesis of pseudouridine from uracil-13 in transfer RNAs. This is Probable tRNA pseudouridine synthase D from Pyrobaculum aerophilum (strain ATCC 51768 / DSM 7523 / JCM 9630 / CIP 104966 / NBRC 100827 / IM2).